Reading from the N-terminus, the 103-residue chain is Acylphosphatase-2 (103 aa).

Ser-2 carries the N-acetylserine modification. One can recognise an Acylphosphatase-like domain in the interval 13 to 103; sequence SVDYEVFGRV…LDFSGFSTRY (91 aa). Catalysis depends on residues Arg-28 and Asn-46.

This sequence belongs to the acylphosphatase family.

It catalyses the reaction an acyl phosphate + H2O = a carboxylate + phosphate + H(+). Functionally, its physiological role is not yet clear. This Anas platyrhynchos (Mallard) protein is Acylphosphatase-2 (ACYP2).